A 427-amino-acid polypeptide reads, in one-letter code: Large ribosomal subunit protein uL4 (427 aa).

N-acetylalanine is present on A2. K14 is subject to N6-acetyllysine. R97 carries the omega-N-methylarginine modification. K106 is modified (N6-acetyllysine). K239 participates in a covalent cross-link: Glycyl lysine isopeptide (Lys-Gly) (interchain with G-Cter in SUMO2). At K259 the chain carries N6-acetyllysine. T266 carries the post-translational modification Phosphothreonine. A phosphoserine mark is found at S290 and S295. R300 bears the Citrulline mark. A Glycyl lysine isopeptide (Lys-Gly) (interchain with G-Cter in SUMO2) cross-link involves residue K327. N6-acetyllysine is present on residues K333 and K353. K364 carries the N6-acetyllysine; alternate modification. A Glycyl lysine isopeptide (Lys-Gly) (interchain with G-Cter in SUMO1); alternate cross-link involves residue K364. At S365 the chain carries Phosphoserine. The tract at residues A369–A427 is disordered. The span at V377 to V397 shows a compositional bias: basic residues. Positions P407–A427 are enriched in basic and acidic residues.

This sequence belongs to the universal ribosomal protein uL4 family. As to quaternary structure, component of the large ribosomal subunit. May bind IPO9 with low affinity. Interacts with RBM3. Citrullinated by PADI4.

The protein localises to the cytoplasm. In terms of biological role, component of the large ribosomal subunit. The ribosome is a large ribonucleoprotein complex responsible for the synthesis of proteins in the cell. The sequence is that of Large ribosomal subunit protein uL4 (RPL4) from Pongo abelii (Sumatran orangutan).